The sequence spans 100 residues: Urease subunit gamma (100 aa).

It belongs to the urease gamma subunit family. As to quaternary structure, heterotrimer of UreA (gamma), UreB (beta) and UreC (alpha) subunits. Three heterotrimers associate to form the active enzyme.

It localises to the cytoplasm. It catalyses the reaction urea + 2 H2O + H(+) = hydrogencarbonate + 2 NH4(+). It functions in the pathway nitrogen metabolism; urea degradation; CO(2) and NH(3) from urea (urease route): step 1/1. The protein is Urease subunit gamma of Citrobacter koseri (strain ATCC BAA-895 / CDC 4225-83 / SGSC4696).